A 232-amino-acid chain; its full sequence is Exosome complex component RRP40 (232 aa).

It belongs to the RRP40 family. In terms of assembly, component of the RNA exosome complex. Specifically part of the catalytically inactive RNA exosome core complex.

It localises to the cytoplasm. Its subcellular location is the nucleus. The protein localises to the nucleolus. Its function is as follows. Non-catalytic component of the RNA exosome complex which has 3'-&gt;5' exoribonuclease activity and participates in a multitude of cellular RNA processing and degradation events. In the nucleus, the RNA exosome complex is involved in proper maturation of stable RNA species such as rRNA, snRNA and snoRNA, in the elimination of RNA processing by-products and non-coding 'pervasive' transcripts such as antisense RNA species, and of mRNAs with processing defects, thereby limiting or excluding their export to the cytoplasm. In the cytoplasm, the RNA exosome complex is involved in general mRNA turnover and specifically degrades inherently unstable mRNAs containing AU-rich elements (AREs) within their 3' untranslated regions, and in RNA surveillance pathways, preventing translation of aberrant mRNAs. The catalytic inactive RNA exosome core complex of 9 subunits is proposed to play a pivotal role in the binding and presentation of RNA for ribonucleolysis, and to serve as a scaffold for the association with catalytic subunits and accessory proteins or complexes. Required generally for normal embryonic and neuronal development. Also plays a critical role in the maintenance of neuronal function in mature flies by controlling the levels of specific mRNAs such as the synaptic regulator Arc1. The polypeptide is Exosome complex component RRP40 (Drosophila melanogaster (Fruit fly)).